The primary structure comprises 114 residues: PDZK1-interacting protein 1 (114 aa).

Topologically, residues 1–28 (MSVLSLVVLSLLMALPPASCQQGRGNLQ) are extracellular. Residues 29–51 (PWMQGLIAVAVFLVLVAIAFAVN) traverse the membrane as a helical segment. Residues 52–114 (HFWCQEKPAP…EEGKVCSTPM (63 aa)) lie on the Cytoplasmic side of the membrane. Phosphoserine is present on Ser85.

This sequence belongs to the PDZK1-interacting protein 1/SMIM24 family. In terms of assembly, forms a heterodimer (via N-terminal transmembrane helix) with SLC5A2/SGLT2 (via TM13); this interaction enhances SLC5A2 transporter activity. Interacts with PDZK1.

The protein localises to the apical cell membrane. In terms of biological role, auxiliary protein of electrogenic Na(+)-coupled sugar symporter SLC5A2/SGLT2 and SLC5A1/SGLT1. Essential for the transporter activity of SLC5A2/SGLT2 but not SLC5A1/SGLT1. The sequence is that of PDZK1-interacting protein 1 from Bos taurus (Bovine).